Here is a 396-residue protein sequence, read N- to C-terminus: Elongation factor Tu 1 (396 aa).

The region spanning 10 to 206 (KPHVNVGTIG…TLDTYIPEPE (197 aa)) is the tr-type G domain. Residues 19–26 (GHVDHGKT) form a G1 region. 19 to 26 (GHVDHGKT) lines the GTP pocket. Thr26 serves as a coordination point for Mg(2+). The segment at 60-64 (GITIN) is G2. A G3 region spans residues 81–84 (DCPG). GTP is bound by residues 81 to 85 (DCPGH) and 136 to 139 (NKCD). The G4 stretch occupies residues 136–139 (NKCD). The interval 174–176 (SAL) is G5.

It belongs to the TRAFAC class translation factor GTPase superfamily. Classic translation factor GTPase family. EF-Tu/EF-1A subfamily. As to quaternary structure, monomer.

The protein resides in the cytoplasm. The catalysed reaction is GTP + H2O = GDP + phosphate + H(+). In terms of biological role, GTP hydrolase that promotes the GTP-dependent binding of aminoacyl-tRNA to the A-site of ribosomes during protein biosynthesis. The sequence is that of Elongation factor Tu 1 from Psychrobacter sp. (strain PRwf-1).